The chain runs to 240 residues: Pathogenesis-related thaumatin-like protein 3.5 (240 aa).

The first 20 residues, 1 to 20, serve as a signal peptide directing secretion; it reads MASLRLATLAMMVLFGSCRA. Cystine bridges form between cysteine 31-cysteine 237, cysteine 79-cysteine 89, cysteine 94-cysteine 100, cysteine 145-cysteine 227, cysteine 150-cysteine 210, cysteine 158-cysteine 173, cysteine 177-cysteine 186, and cysteine 187-cysteine 197.

Belongs to the thaumatin family. In terms of tissue distribution, strongly expressed in pollen grains. Also present at weak levels in seedling roots, in sapling stems and in developing male strobili.

Functionally, may be involved in disease resistance. In Cryptomeria japonica (Japanese cedar), this protein is Pathogenesis-related thaumatin-like protein 3.5.